The following is a 1717-amino-acid chain: PH domain leucine-rich repeat-containing protein phosphatase 1 (1717 aa).

At methionine 1 the chain carries N-acetylmethionine. 4 disordered regions span residues 1 to 25 (MEPA…SAPA), 41 to 118 (LAAA…GANS), 136 to 156 (AASS…GAAG), and 252 to 470 (PGAA…PPPT). Positions 98 to 110 (APQPIAGGAAPVP) are enriched in low complexity. The span at 262-274 (EPPPEAGPRLAPP) shows a compositional bias: pro residues. Composition is skewed to low complexity over residues 313–325 (SRRA…DSSP) and 333–345 (PVSS…PVVS). Serine 317 is subject to Phosphoserine. Composition is skewed to polar residues over residues 346–358 (DTES…SAES) and 408–417 (QTASSPQPQQ). The residue at position 412 (serine 412) is a Phosphoserine. Residues 536–636 (RIQLSGMYNV…WLRQVSKVAS (101 aa)) form the PH domain. LRR repeat units lie at residues 638–659 (RISS…LFYS), 661–682 (DLTH…PAAR), 692–712 (KLKS…AVCS), 715–736 (TLAE…VGVM), 738–760 (NLQT…ENMK), 761–783 (QLSY…EKLT), 784–804 (AVDK…QALR), 808–831 (HIKH…DFLQ), 832–853 (HVTQ…IFNN), 873–894 (FLKA…PVPN), 895–916 (YLSY…VCES), 918–939 (KLEV…LFCN), 941–962 (SLRK…LERT), 963–984 (SVEV…LLMK), 987–1008 (SLRF…TLSE), 1013–1033 (ILQE…PLLT), 1037–1058 (HLKI…KMAK), 1061–1082 (ELEE…IMNC), 1084–1105 (RMHT…MQLP), 1106–1127 (EIKC…ENLP), and 1129–1150 (KLQE…TLEL). An interaction with NHERF1 region spans residues 1076–1205 (PTTIMNCRRM…NNFCDNREAL (130 aa)). The 248-residue stretch at 1175–1422 (SHGYTEASGV…DSISAVVVQL (248 aa)) folds into the PPM-type phosphatase domain. The Mn(2+) site is built by aspartate 1210, glycine 1211, lysine 1374, and aspartate 1413. Disordered stretches follow at residues 1458–1510 (DRPS…SPAY) and 1673–1717 (EVKE…DTPL). A compositionally biased stretch (low complexity) spans 1468-1489 (SSSSGMASEISSELSTSEMSSE). The PDZ-binding; required for interaction with NHERF1 signature appears at 1715–1717 (TPL).

Interacts with the nucleotide free form of K-Ras (KRAS) via its LRR repeats. Interacts with AKT2, AKT3, PRKCB isoform beta-II, STK4, RPS6KB1, RAF1. Isoform 1 (predominantly) and isoform 2 interact with BRAP. Interacts with FKBP5; FKBP5 acts as a scaffold for PHLPP1 and Akt. Interacts with SCRIB; SCRIB acts as a scaffold for PHLPP1 and Akt. Interacts with NHERF1; NHERF1 scaffolds a heterotrimeric complex with PTEN at the plasma membrane. Interacts with WDR48 and USP12. Requires Mn(2+) as cofactor. As to expression, in colorectal cancer tissue, expression is highest in the surface epithelium of normal colonic mucosa adjacent to the cancer tissue but is largely excluded from the crypt bases. Expression is lost or significantly decreased in 78% of tested tumors (at protein level). Ubiquitously expressed in non-cancerous tissues.

It is found in the cytoplasm. The protein localises to the membrane. The protein resides in the nucleus. It localises to the cell membrane. It catalyses the reaction O-phospho-L-seryl-[protein] + H2O = L-seryl-[protein] + phosphate. The catalysed reaction is O-phospho-L-threonyl-[protein] + H2O = L-threonyl-[protein] + phosphate. With respect to regulation, insensitive to okadaic acid. Deubiquitination by WDR48-USP12 complex positively regulates PHLPP1 stability. In terms of biological role, protein phosphatase involved in regulation of Akt and PKC signaling. Mediates dephosphorylation in the C-terminal domain hydrophobic motif of members of the AGC Ser/Thr protein kinase family; specifically acts on 'Ser-473' of AKT2 and AKT3, 'Ser-660' of PRKCB and 'Ser-657' of PRKCA. Isoform 2 seems to have a major role in regulating Akt signaling in hippocampal neurons. Akt regulates the balance between cell survival and apoptosis through a cascade that primarily alters the function of transcription factors that regulate pro- and antiapoptotic genes. Dephosphorylation of 'Ser-473' of Akt triggers apoptosis and suppression of tumor growth. Dephosphorylation of PRKCA and PRKCB leads to their destabilization and degradation. Dephosphorylates STK4 on 'Thr-387' leading to STK4 activation and apoptosis. Dephosphorylates RPS6KB1 and is involved in regulation of cap-dependent translation. Inhibits cancer cell proliferation and may act as a tumor suppressor. Dephosphorylates RAF1 inhibiting its kinase activity. May act as a negative regulator of K-Ras signaling in membrane rafts. Involved in the hippocampus-dependent long-term memory formation. Involved in circadian control by regulating the consolidation of circadian periodicity after resetting. Involved in development and function of regulatory T-cells. In Homo sapiens (Human), this protein is PH domain leucine-rich repeat-containing protein phosphatase 1 (PHLPP1).